The following is a 742-amino-acid chain: 5-methyltetrahydropteroyltriglutamate--homocysteine methyltransferase (742 aa).

5-methyltetrahydropteroyltri-L-glutamate-binding positions include 18–21 (REWK) and K112. L-homocysteine-binding positions include 420-422 (IGS) and E473. L-methionine-binding positions include 420-422 (IGS) and E473. W550 lines the 5-methyltetrahydropteroyltri-L-glutamate pocket. D588 is an L-homocysteine binding site. D588 lines the L-methionine pocket. E594 is a 5-methyltetrahydropteroyltri-L-glutamate binding site. The Zn(2+) site is built by H630, C632, and E654. H683 acts as the Proton donor in catalysis. Position 715 (C715) interacts with Zn(2+).

This sequence belongs to the vitamin-B12 independent methionine synthase family. Requires Zn(2+) as cofactor.

It catalyses the reaction 5-methyltetrahydropteroyltri-L-glutamate + L-homocysteine = tetrahydropteroyltri-L-glutamate + L-methionine. It functions in the pathway amino-acid biosynthesis; L-methionine biosynthesis via de novo pathway; L-methionine from L-homocysteine (MetE route): step 1/1. In terms of biological role, catalyzes the transfer of a methyl group from 5-methyltetrahydrofolate to homocysteine resulting in methionine formation. This chain is 5-methyltetrahydropteroyltriglutamate--homocysteine methyltransferase, found in Staphylococcus aureus (strain bovine RF122 / ET3-1).